A 279-amino-acid chain; its full sequence is Peptide deformylase 1B, chloroplastic (279 aa).

Residues C177 and H219 each coordinate Fe cation. The active site involves E220. H223 contributes to the Fe cation binding site.

This sequence belongs to the polypeptide deformylase family. Fe(2+) is required as a cofactor.

The protein localises to the plastid. The protein resides in the chloroplast. The catalysed reaction is N-terminal N-formyl-L-methionyl-[peptide] + H2O = N-terminal L-methionyl-[peptide] + formate. In terms of biological role, removes the formyl group from the N-terminal Met of newly synthesized proteins. The sequence is that of Peptide deformylase 1B, chloroplastic (PDF1B) from Solanum lycopersicum (Tomato).